The primary structure comprises 161 residues: Phosphopantetheine adenylyltransferase (161 aa).

S9 lines the substrate pocket. Residues 9–10 and H17 contribute to the ATP site; that span reads SF. Substrate contacts are provided by K41, L73, and K87. ATP is bound by residues 88-90, E98, and 122-128; these read GLR and YSFVSSS.

It belongs to the bacterial CoaD family. As to quaternary structure, homohexamer. Mg(2+) serves as cofactor.

It localises to the cytoplasm. The enzyme catalyses (R)-4'-phosphopantetheine + ATP + H(+) = 3'-dephospho-CoA + diphosphate. It participates in cofactor biosynthesis; coenzyme A biosynthesis; CoA from (R)-pantothenate: step 4/5. Functionally, reversibly transfers an adenylyl group from ATP to 4'-phosphopantetheine, yielding dephospho-CoA (dPCoA) and pyrophosphate. This chain is Phosphopantetheine adenylyltransferase, found in Mycobacteroides abscessus (strain ATCC 19977 / DSM 44196 / CCUG 20993 / CIP 104536 / JCM 13569 / NCTC 13031 / TMC 1543 / L948) (Mycobacterium abscessus).